The following is a 390-amino-acid chain: GTPase Obg/CgtA (390 aa).

Positions 1–159 constitute an Obg domain; it reads MKFVDEAVIK…RDIRLELLLL (159 aa). Positions 160-333 constitute an OBG-type G domain; the sequence is ADVGMLGMPN…LCMKLAEFMD (174 aa). GTP is bound by residues 166–173, 191–195, 213–216, 283–286, and 314–316; these read GMPNAGKS, FTTLV, DIPG, NKVD, and SAA. Positions 173 and 193 each coordinate Mg(2+).

This sequence belongs to the TRAFAC class OBG-HflX-like GTPase superfamily. OBG GTPase family. In terms of assembly, monomer. Interacts with SpoT (AC Q9KNM2) in a yeast 2-hybrid assay. The cofactor is Mg(2+).

It localises to the cytoplasm. In terms of biological role, depletion experiments lead to gene down regulation and a dramatic increase in ppGpp levels, like those seen in the stringent response. There is no change in cell morphology in depletion experiments, but cells are very sensitive to the DNA-damaging agent hydroxyurea and are very elongated. Overexpression reduces growth and leads to elongated cells. Overexpression of proteins with C-terminal deletions of 29 or 62 amino acids showed fewer elongated cells. Its function is as follows. An essential GTPase which binds GTP, GDP and possibly (p)ppGpp with moderate affinity, with high nucleotide exchange rates and a fairly low GTP hydrolysis rate. It may play a role in control of the cell cycle, stress response, ribosome biogenesis and in those bacteria that undergo differentiation, in morphogenesis control. GTPase activity is stimulated by 50S ribosomal subunits. The protein is GTPase Obg/CgtA of Vibrio cholerae serotype O1 (strain ATCC 39315 / El Tor Inaba N16961).